Reading from the N-terminus, the 189-residue chain is Movement protein (189 aa).

The protein belongs to the tombusvirus/aureusvirus movement protein p22 family. As to quaternary structure, interacts with host protein HFI22. In terms of processing, phosphorylated.

The protein resides in the host membrane. Transports viral genome to neighboring plant cells directly through plasmosdesmata, without any budding. The movement protein allows efficient cell to cell propagation, by bypassing the host cell wall barrier. In Capsicum annuum (Capsicum pepper), this protein is Movement protein.